The following is a 70-amino-acid chain: MIGILLLIGICVAVTVAILYTLYNKIKNPQNPNPSPNLNSPPPETRNTKFVNNLEKDHISSLYNLVKSSA.

Residues 2–22 (IGILLLIGICVAVTVAILYTL) form a helical membrane-spanning segment. Residues 23–68 (YNKIKNPQNPNPSPNLNSPPPETRNTKFVNNLEKDHISSLYNLVKS) are Virion surface-facing. Positions 27-49 (KNPQNPNPSPNLNSPPPETRNTK) are disordered. Over residues 31-44 (NPNPSPNLNSPPPE) the composition is skewed to pro residues.

Belongs to the orthopoxvirus OPG139 family. Phosphorylated by a OPG054-independent mechanism.

It localises to the virion membrane. In terms of biological role, essential for the encapsidation of DNA into immature virions (IV) and the subsequent maturation of IV into mature virions (MV). This Monkeypox virus protein is Virion membrane protein OPG139 (OPG139).